The following is a 636-amino-acid chain: Probable potassium transport system protein Kup (636 aa).

Helical transmembrane passes span L23–L43, I63–V83, V114–P134, P150–I170, F182–V202, I217–V237, W260–L280, L298–I318, I350–F370, A379–M399, P407–A427, and V432–T452.

The protein belongs to the HAK/KUP transporter (TC 2.A.72) family.

It localises to the cell inner membrane. The enzyme catalyses K(+)(in) + H(+)(in) = K(+)(out) + H(+)(out). In terms of biological role, transport of potassium into the cell. Likely operates as a K(+):H(+) symporter. In Cupriavidus pinatubonensis (strain JMP 134 / LMG 1197) (Cupriavidus necator (strain JMP 134)), this protein is Probable potassium transport system protein Kup.